The primary structure comprises 785 residues: Endonuclease MutS2 (785 aa).

333–340 (GPNTGGKT) lines the ATP pocket. A Smr domain is found at 710–785 (LDLRGQRYDE…GNGATIVQLK (76 aa)).

The protein belongs to the DNA mismatch repair MutS family. MutS2 subfamily. In terms of assembly, homodimer. Binds to stalled ribosomes, contacting rRNA.

Endonuclease that is involved in the suppression of homologous recombination and thus may have a key role in the control of bacterial genetic diversity. Functionally, acts as a ribosome collision sensor, splitting the ribosome into its 2 subunits. Detects stalled/collided 70S ribosomes which it binds and splits by an ATP-hydrolysis driven conformational change. Acts upstream of the ribosome quality control system (RQC), a ribosome-associated complex that mediates the extraction of incompletely synthesized nascent chains from stalled ribosomes and their subsequent degradation. Probably generates substrates for RQC. The sequence is that of Endonuclease MutS2 from Lactobacillus acidophilus (strain ATCC 700396 / NCK56 / N2 / NCFM).